A 90-amino-acid chain; its full sequence is DNA-binding protein HU (90 aa).

The protein belongs to the bacterial histone-like protein family. Homodimer.

Its function is as follows. Histone-like DNA-binding protein which is capable of wrapping DNA to stabilize it, and thus to prevent its denaturation under extreme environmental conditions. The sequence is that of DNA-binding protein HU (hup) from Haemophilus influenzae (strain ATCC 51907 / DSM 11121 / KW20 / Rd).